A 144-amino-acid chain; its full sequence is MFLNTIQPAVGATHAGRRVGRGIGSGLGKTGGRGHKGQKSRSGGFHKVGFEGGQMPLQRRLPKRGFKSLTVSANAQLRLSELESIAVNEIDILVLKQAGLIASTVSNVKVIASGEISKAVALKGIKVTKGARAAIEDVGGKIEM.

Residues G20–G49 are disordered. The span at R21–G31 shows a compositional bias: gly residues.

It belongs to the universal ribosomal protein uL15 family. As to quaternary structure, part of the 50S ribosomal subunit.

Its function is as follows. Binds to the 23S rRNA. This is Large ribosomal subunit protein uL15 from Neisseria gonorrhoeae (strain ATCC 700825 / FA 1090).